A 328-amino-acid polypeptide reads, in one-letter code: Probable fused nickel transport protein LarMN (328 aa).

Helical transmembrane passes span Leu-8–Val-28, Leu-42–Ile-62, Leu-75–Leu-95, Gly-103–Gly-123, Leu-138–Glu-158, Met-187–Phe-207, Pro-229–Asn-249, and Pro-296–Ile-316.

It belongs to the CbiM family. NikM subfamily. In terms of assembly, may form an energy-coupling factor (ECF) transporter complex composed of an ATP-binding protein (A component, LarO), a transmembrane protein (T component, LarQ) and a fused possible substrate-capture protein (S component, LarMN) of unknown stoichiometry.

Its subcellular location is the cell membrane. Functionally, probably part of the energy-coupling factor (ECF) transporter complex LarMNQO involved in nickel import. The protein is Probable fused nickel transport protein LarMN of Lactiplantibacillus plantarum (strain ATCC BAA-793 / NCIMB 8826 / WCFS1) (Lactobacillus plantarum).